Consider the following 118-residue polypeptide: Ribosome-binding factor A (118 aa).

The protein belongs to the RbfA family. In terms of assembly, monomer. Binds 30S ribosomal subunits, but not 50S ribosomal subunits or 70S ribosomes.

It is found in the cytoplasm. Its function is as follows. One of several proteins that assist in the late maturation steps of the functional core of the 30S ribosomal subunit. Associates with free 30S ribosomal subunits (but not with 30S subunits that are part of 70S ribosomes or polysomes). Required for efficient processing of 16S rRNA. May interact with the 5'-terminal helix region of 16S rRNA. The sequence is that of Ribosome-binding factor A from Latilactobacillus sakei subsp. sakei (strain 23K) (Lactobacillus sakei subsp. sakei).